We begin with the raw amino-acid sequence, 360 residues long: Chorismate synthase (360 aa).

Residues Arg48 and Arg54 each contribute to the NADP(+) site. FMN contacts are provided by residues 125–127 (RSS), 246–247 (NA), Gly286, 301–305 (KPTSS), and Arg327.

The protein belongs to the chorismate synthase family. Homotetramer. Requires FMNH2 as cofactor.

The enzyme catalyses 5-O-(1-carboxyvinyl)-3-phosphoshikimate = chorismate + phosphate. It participates in metabolic intermediate biosynthesis; chorismate biosynthesis; chorismate from D-erythrose 4-phosphate and phosphoenolpyruvate: step 7/7. Catalyzes the anti-1,4-elimination of the C-3 phosphate and the C-6 proR hydrogen from 5-enolpyruvylshikimate-3-phosphate (EPSP) to yield chorismate, which is the branch point compound that serves as the starting substrate for the three terminal pathways of aromatic amino acid biosynthesis. This reaction introduces a second double bond into the aromatic ring system. In Haemophilus ducreyi (strain 35000HP / ATCC 700724), this protein is Chorismate synthase.